The following is a 470-amino-acid chain: Cysteine--tRNA ligase (470 aa).

A Zn(2+)-binding site is contributed by C28. The 'HIGH' region motif lies at 30–40 (PTVYNYIHIGN). Zn(2+)-binding residues include C211, H236, and E240. Residues 270-274 (KMSKS) carry the 'KMSKS' region motif. Residue K273 coordinates ATP.

Belongs to the class-I aminoacyl-tRNA synthetase family. In terms of assembly, monomer. Zn(2+) serves as cofactor.

Its subcellular location is the cytoplasm. The catalysed reaction is tRNA(Cys) + L-cysteine + ATP = L-cysteinyl-tRNA(Cys) + AMP + diphosphate. The polypeptide is Cysteine--tRNA ligase (Enterococcus faecalis (strain ATCC 700802 / V583)).